The sequence spans 225 residues: Endonuclease V (225 aa).

Mg(2+) is bound by residues Asp-43 and Asp-110.

Belongs to the endonuclease V family. Mg(2+) is required as a cofactor.

It is found in the cytoplasm. It catalyses the reaction Endonucleolytic cleavage at apurinic or apyrimidinic sites to products with a 5'-phosphate.. DNA repair enzyme involved in the repair of deaminated bases. Selectively cleaves double-stranded DNA at the second phosphodiester bond 3' to a deoxyinosine leaving behind the intact lesion on the nicked DNA. This chain is Endonuclease V, found in Thermotoga neapolitana (strain ATCC 49049 / DSM 4359 / NBRC 107923 / NS-E).